Here is a 279-residue protein sequence, read N- to C-terminus: 3-methyl-2-oxobutanoate hydroxymethyltransferase (279 aa).

Positions 44 and 83 each coordinate Mg(2+). Residues 44 to 45, Asp83, and Lys112 each bind 3-methyl-2-oxobutanoate; that span reads DS. Mg(2+) is bound at residue Glu114. Glu180 acts as the Proton acceptor in catalysis.

Belongs to the PanB family. Homodecamer; pentamer of dimers. It depends on Mg(2+) as a cofactor.

The protein resides in the cytoplasm. It catalyses the reaction 3-methyl-2-oxobutanoate + (6R)-5,10-methylene-5,6,7,8-tetrahydrofolate + H2O = 2-dehydropantoate + (6S)-5,6,7,8-tetrahydrofolate. The protein operates within cofactor biosynthesis; (R)-pantothenate biosynthesis; (R)-pantoate from 3-methyl-2-oxobutanoate: step 1/2. Functionally, catalyzes the reversible reaction in which hydroxymethyl group from 5,10-methylenetetrahydrofolate is transferred onto alpha-ketoisovalerate to form ketopantoate. In Chloroflexus aggregans (strain MD-66 / DSM 9485), this protein is 3-methyl-2-oxobutanoate hydroxymethyltransferase.